Reading from the N-terminus, the 355-residue chain is Cyclic nucleotide-gated potassium channel RHE_CH03180 (355 aa).

The Cytoplasmic segment spans residues 1–12 (MSAVPFSKISTP). The helical transmembrane segment at 13-30 (LNALFATIGLLVVAALTT) threads the bilayer. The Periplasmic segment spans residues 31-38 (QGLTGQER). A helical transmembrane segment spans residues 39 to 61 (LVFELLLAAIWLAYVLQLSGTLL). The Cytoplasmic segment spans residues 62–73 (SRRRRLSGEMTA). The chain crosses the membrane as a helical span at residues 74–93 (LVIDLLAVLVPAAAFLFVGS). The chain crosses the membrane as a helical span at residues 94-111 (RDRDLYCAIWLLKPLRDS). At 112–128 (TFFRLLAKVVANESRNL) the chain is on the cytoplasmic side. A helical transmembrane segment spans residues 129–149 (LGVTSVFGIVLFGAALAGYII). The Periplasmic segment spans residues 150 to 160 (ERDVQPDKFGS). The pore-forming intramembrane region spans 161 to 179 (IPQAMWWAVVTLSTTGYGD). Positions 174–179 (TTGYGD) match the Selectivity filter motif. Over 180 to 184 (EIPQS) the chain is Periplasmic. A helical membrane pass occupies residues 185–209 (LAGRVLAGLVMMSGIGIFALWAGIL). Over 210–355 (ATGFYEEVRR…LERRGGPPKE (146 aa)) the chain is Cytoplasmic. Residues 297-298 (GE), 307-308 (RS), and arginine 348 contribute to the 3',5'-cyclic AMP site.

Belongs to the potassium channel family. In terms of assembly, homotetramer.

It localises to the cell membrane. In terms of biological role, cyclic nucleotide-regulated potassium channel activated by cAMP. This is Cyclic nucleotide-gated potassium channel RHE_CH03180 from Rhizobium etli (strain ATCC 51251 / DSM 11541 / JCM 21823 / NBRC 15573 / CFN 42).